The chain runs to 340 residues: Uroporphyrinogen decarboxylase (340 aa).

Residues 21 to 25, Asp71, Tyr148, Ser203, and His316 contribute to the substrate site; that span reads RQAGR.

Belongs to the uroporphyrinogen decarboxylase family. In terms of assembly, homodimer.

The protein localises to the cytoplasm. The catalysed reaction is uroporphyrinogen III + 4 H(+) = coproporphyrinogen III + 4 CO2. Its pathway is porphyrin-containing compound metabolism; protoporphyrin-IX biosynthesis; coproporphyrinogen-III from 5-aminolevulinate: step 4/4. Its function is as follows. Catalyzes the decarboxylation of four acetate groups of uroporphyrinogen-III to yield coproporphyrinogen-III. In Campylobacter hominis (strain ATCC BAA-381 / DSM 21671 / CCUG 45161 / LMG 19568 / NCTC 13146 / CH001A), this protein is Uroporphyrinogen decarboxylase.